The chain runs to 299 residues: DNA-binding transcriptional repressor CapW (299 aa).

The disordered stretch occupies residues 1–22 (MTDESKPTDDQPTSKGRQGARW). The segment at 1-95 (MTDESKPTDD…SFKAVFPSSA (95 aa)) is winged HTH domain. The interval 96-207 (VERYLDDLLR…LTRIKCCKYV (112 aa)) is WYL domain. The 81-residue stretch at 131–211 (GRRLNADIVG…KCCKYVGQDR (81 aa)) folds into the WYL domain. A probable ligand-binding region region spans residues 156-200 (YQSLTDPEGGERMLSPHALVHDGNRWHVRAYCHKRKAFRDFSLTR). Residues 208 to 299 (GQDRDRADED…RDEIKDLIQY (92 aa)) form a WCX domain region.

Homodimer.

Functionally, transcriptional regulator of a CBASS antivirus system. CBASS (cyclic oligonucleotide-based antiphage signaling system) provides immunity against bacteriophage. The CD-NTase protein synthesizes cyclic nucleotides in response to infection; these serve as specific second messenger signals. The signals activate a diverse range of effectors, leading to bacterial cell death and thus abortive phage infection. A type III CBASS system, part of a Cap17-CapW-CdnC-Cap7-Cap6-Cap18 locus. Binds specifically to palindromes that overlap the -10 site in the promoter of cdnC, found between the genes for divergently transcribed capW and cdnC (cognate DNA). Probably represses transcription bidirectionally from the promoter. This chain is DNA-binding transcriptional repressor CapW, found in Pseudomonas aeruginosa.